Consider the following 255-residue polypeptide: tRNA (guanine-N(1)-)-methyltransferase (255 aa).

S-adenosyl-L-methionine contacts are provided by residues Gly-113 and Ile-133–Leu-138.

The protein belongs to the RNA methyltransferase TrmD family. In terms of assembly, homodimer.

The protein resides in the cytoplasm. The catalysed reaction is guanosine(37) in tRNA + S-adenosyl-L-methionine = N(1)-methylguanosine(37) in tRNA + S-adenosyl-L-homocysteine + H(+). Its function is as follows. Specifically methylates guanosine-37 in various tRNAs. The polypeptide is tRNA (guanine-N(1)-)-methyltransferase (Chloroflexus aggregans (strain MD-66 / DSM 9485)).